Here is a 708-residue protein sequence, read N- to C-terminus: Polyribonucleotide nucleotidyltransferase (708 aa).

Mg(2+) is bound by residues Asp-488 and Asp-494. The 61-residue stretch at 555–615 (PIIKVTKVDP…ENVDKAIELI (61 aa)) folds into the KH domain. Residues 625–692 (GEVLEGKVTR…DLGRLQFKRV (68 aa)) enclose the S1 motif domain.

The protein belongs to the polyribonucleotide nucleotidyltransferase family. Requires Mg(2+) as cofactor.

It is found in the cytoplasm. It catalyses the reaction RNA(n+1) + phosphate = RNA(n) + a ribonucleoside 5'-diphosphate. Involved in mRNA degradation. Catalyzes the phosphorolysis of single-stranded polyribonucleotides processively in the 3'- to 5'-direction. The polypeptide is Polyribonucleotide nucleotidyltransferase (Thermotoga sp. (strain RQ2)).